The following is a 478-amino-acid chain: Methylenetetrahydrofolate--tRNA-(uracil-5-)-methyltransferase TrmFO (478 aa).

16–21 is an FAD binding site; it reads GAGLAG. Residues 429-448 are disordered; it reads PLANPPTKGPDGKRLRGPEK. Residues 438 to 448 show a composition bias toward basic and acidic residues; the sequence is PDGKRLRGPEK.

Belongs to the MnmG family. TrmFO subfamily. It depends on FAD as a cofactor.

It localises to the cytoplasm. It catalyses the reaction uridine(54) in tRNA + (6R)-5,10-methylene-5,6,7,8-tetrahydrofolate + NADH + H(+) = 5-methyluridine(54) in tRNA + (6S)-5,6,7,8-tetrahydrofolate + NAD(+). The catalysed reaction is uridine(54) in tRNA + (6R)-5,10-methylene-5,6,7,8-tetrahydrofolate + NADPH + H(+) = 5-methyluridine(54) in tRNA + (6S)-5,6,7,8-tetrahydrofolate + NADP(+). Functionally, catalyzes the folate-dependent formation of 5-methyl-uridine at position 54 (M-5-U54) in all tRNAs. In Rhodopseudomonas palustris (strain ATCC BAA-98 / CGA009), this protein is Methylenetetrahydrofolate--tRNA-(uracil-5-)-methyltransferase TrmFO.